Here is a 316-residue protein sequence, read N- to C-terminus: Transaldolase (316 aa).

The active-site Schiff-base intermediate with substrate is Lys131.

Belongs to the transaldolase family. Type 1 subfamily. As to quaternary structure, homodimer.

It localises to the cytoplasm. It catalyses the reaction D-sedoheptulose 7-phosphate + D-glyceraldehyde 3-phosphate = D-erythrose 4-phosphate + beta-D-fructose 6-phosphate. The protein operates within carbohydrate degradation; pentose phosphate pathway; D-glyceraldehyde 3-phosphate and beta-D-fructose 6-phosphate from D-ribose 5-phosphate and D-xylulose 5-phosphate (non-oxidative stage): step 2/3. Its function is as follows. Transaldolase is important for the balance of metabolites in the pentose-phosphate pathway. The sequence is that of Transaldolase from Sodalis glossinidius (strain morsitans).